The chain runs to 700 residues: Elongation factor G (700 aa).

The 277-residue stretch at 10–286 folds into the tr-type G domain; it reads SKVRNIGIMA…AVIDYLPSPL (277 aa). Residues 19 to 26, 83 to 87, and 137 to 140 each bind GTP; these read AHIDAGKT, DTPGH, and NKMD.

Belongs to the TRAFAC class translation factor GTPase superfamily. Classic translation factor GTPase family. EF-G/EF-2 subfamily.

The protein localises to the cytoplasm. Functionally, catalyzes the GTP-dependent ribosomal translocation step during translation elongation. During this step, the ribosome changes from the pre-translocational (PRE) to the post-translocational (POST) state as the newly formed A-site-bound peptidyl-tRNA and P-site-bound deacylated tRNA move to the P and E sites, respectively. Catalyzes the coordinated movement of the two tRNA molecules, the mRNA and conformational changes in the ribosome. The chain is Elongation factor G from Mycolicibacterium gilvum (strain PYR-GCK) (Mycobacterium gilvum (strain PYR-GCK)).